Reading from the N-terminus, the 203-residue chain is Imidazoleglycerol-phosphate dehydratase (203 aa).

It belongs to the imidazoleglycerol-phosphate dehydratase family.

It is found in the cytoplasm. The enzyme catalyses D-erythro-1-(imidazol-4-yl)glycerol 3-phosphate = 3-(imidazol-4-yl)-2-oxopropyl phosphate + H2O. The protein operates within amino-acid biosynthesis; L-histidine biosynthesis; L-histidine from 5-phospho-alpha-D-ribose 1-diphosphate: step 6/9. The polypeptide is Imidazoleglycerol-phosphate dehydratase (Parvibaculum lavamentivorans (strain DS-1 / DSM 13023 / NCIMB 13966)).